The primary structure comprises 309 residues: Homoserine O-succinyltransferase (309 aa).

The active-site Acyl-thioester intermediate is C142. The substrate site is built by K163 and S192. H235 (proton acceptor) is an active-site residue. Residue E237 is part of the active site. R249 lines the substrate pocket.

It belongs to the MetA family. As to quaternary structure, homodimer.

It is found in the cytoplasm. It carries out the reaction L-homoserine + succinyl-CoA = O-succinyl-L-homoserine + CoA. The protein operates within amino-acid biosynthesis; L-methionine biosynthesis via de novo pathway; O-succinyl-L-homoserine from L-homoserine: step 1/1. Transfers a succinyl group from succinyl-CoA to L-homoserine, forming succinyl-L-homoserine. The chain is Homoserine O-succinyltransferase from Escherichia coli O127:H6 (strain E2348/69 / EPEC).